The chain runs to 354 residues: NADH-quinone oxidoreductase subunit H (354 aa).

A run of 8 helical transmembrane segments spans residues 25-45, 91-111, 126-146, 170-190, 205-225, 253-273, 290-310, and 330-350; these read LVRILVVAVVILLCVAYLILW, WLYLIAPVMTVVPAFAVWAVI, LLYAMAISSIGVYAVILAGWA, MGFALVLVLMTAGSLNLSEIV, FLSWNWLPLLPVFVIYFISGI, MAFALFFLAEYINMIVISALA, FIPGIFWLVLKVFALLSVFIW, and VFLPVCVFWVIVVGFWMMSPL.

This sequence belongs to the complex I subunit 1 family. NDH-1 is composed of 14 different subunits. Subunits NuoA, H, J, K, L, M, N constitute the membrane sector of the complex.

It localises to the cell inner membrane. It carries out the reaction a quinone + NADH + 5 H(+)(in) = a quinol + NAD(+) + 4 H(+)(out). NDH-1 shuttles electrons from NADH, via FMN and iron-sulfur (Fe-S) centers, to quinones in the respiratory chain. The immediate electron acceptor for the enzyme in this species is believed to be ubiquinone. Couples the redox reaction to proton translocation (for every two electrons transferred, four hydrogen ions are translocated across the cytoplasmic membrane), and thus conserves the redox energy in a proton gradient. This subunit may bind ubiquinone. The chain is NADH-quinone oxidoreductase subunit H from Burkholderia thailandensis (strain ATCC 700388 / DSM 13276 / CCUG 48851 / CIP 106301 / E264).